A 237-amino-acid chain; its full sequence is UDP-2,3-diacylglucosamine hydrolase (237 aa).

Mn(2+) contacts are provided by Asp-9, His-11, Asp-42, Asn-80, and His-115. A substrate-binding site is contributed by 80-81 (NR). Positions 123, 161, 165, 168, and 196 each coordinate substrate. Mn(2+)-binding residues include His-196 and His-198.

Belongs to the LpxH family. It depends on Mn(2+) as a cofactor.

Its subcellular location is the cell inner membrane. It localises to the cytoplasm. It carries out the reaction UDP-2-N,3-O-bis[(3R)-3-hydroxytetradecanoyl]-alpha-D-glucosamine + H2O = 2-N,3-O-bis[(3R)-3-hydroxytetradecanoyl]-alpha-D-glucosaminyl 1-phosphate + UMP + 2 H(+). It participates in glycolipid biosynthesis; lipid IV(A) biosynthesis; lipid IV(A) from (3R)-3-hydroxytetradecanoyl-[acyl-carrier-protein] and UDP-N-acetyl-alpha-D-glucosamine: step 4/6. In terms of biological role, hydrolyzes the pyrophosphate bond of UDP-2,3-diacylglucosamine to yield 2,3-diacylglucosamine 1-phosphate (lipid X) and UMP by catalyzing the attack of water at the alpha-P atom. Involved in the biosynthesis of lipid A, a phosphorylated glycolipid that anchors the lipopolysaccharide to the outer membrane of the cell. The chain is UDP-2,3-diacylglucosamine hydrolase from Haemophilus influenzae (strain ATCC 51907 / DSM 11121 / KW20 / Rd).